The following is a 191-amino-acid chain: Calcium and integrin-binding protein 1 (191 aa).

The N-myristoyl glycine moiety is linked to residue Gly2. EF-hand domains are found at residues 103–138 and 148–183; these read TPDI…LTGE and EMKQ…SPDF. 10 residues coordinate Ca(2+): Asp116, Asp118, Asp120, Thr122, Asp127, Asp161, Asp163, Asp165, Thr167, and Glu172.

In terms of assembly, monomer. Interacts with the heterodimeric integrin alpha-IIb/beta3 (ITGA2B-ITGB3). Interacts with ITGA2B (via cytoplasmic domain); the interaction is direct and calcium-dependent. Interacts with the protein kinases PLK2/SNK and PRKDC (via the region immediately upstream of the kinase domain). Interacts with PLK3; the interaction inhibits PLK3 kinase activity. Interacts with PSEN2. Interacts (via C-terminus) with F8. Interacts with NBR1 (via C-terminus). Interacts with FEZ1 (via C-terminus). Interacts with UBR5 (via C-terminus); the interaction is sensitive to DNA damage, and may target CIB1 for ubiquitin-mediated degradation. Interacts with IFI6; the interaction is direct. Interacts with BCL2. Interacts with ITPR3; the interaction occurs in a calcium dependent manner. Interacts with PTK2/FAK1. Interacts with MAP3K5; the interaction inhibits MAP3K5 activation by phosphorylation, and its subsequent interaction with TRAF2. Interacts (via C-terminal region) with STMN2 (via the N-terminal region); the interaction is direct, occurs in a calcium-dependent manner and attenuates the STMN2-induced neurite outgrowth inhibition. Interacts with SPHK1, the interaction occurs in a calcium-dependent manner. Interacts with ITGA2B (via C-terminal cytoplasmic tail); the interaction occurs upon platelet aggregation and is stabilized/increased in a calcium and magnesium-dependent manner. Interacts with PAK1 (via N-terminal region); the interaction is direct and occurs in a calcium-dependent manner. Interacts with RAC3 (via C-terminal region); the interaction induces their association with the cytoskeleton upon alpha-IIb/beta3 integrin-mediated adhesion. Interacts with ITGA5 and ITGAV. Interacts with MYO1C. Interacts with ITGA2B (via C-terminal cytoplasmic tail region). Interacts (via C-terminal region) with PPP3R1; the interaction increases upon cardiomyocytes hypertrophy. Interacts with CACNA1C; the interaction increases upon cardiomyocytes hypertrophy. Interacts with TAS1R2 (via C-terminus); this interaction is independent of the myristoylation state of CIB1. Interacts and forms a complex with TMC6 and TMC8; the interaction stabilizes each component of the complex.

Its subcellular location is the membrane. The protein resides in the cell membrane. It localises to the sarcolemma. It is found in the apical cell membrane. The protein localises to the cell projection. Its subcellular location is the ruffle membrane. The protein resides in the filopodium tip. It localises to the growth cone. It is found in the lamellipodium. The protein localises to the cytoplasm. Its subcellular location is the cytoskeleton. The protein resides in the microtubule organizing center. It localises to the centrosome. It is found in the perinuclear region. The protein localises to the nucleus. Its subcellular location is the neuron projection. The protein resides in the perikaryon. Functionally, calcium-binding protein that plays a role in the regulation of numerous cellular processes, such as cell differentiation, cell division, cell proliferation, cell migration, thrombosis, angiogenesis, cardiac hypertrophy and apoptosis. Involved in bone marrow megakaryocyte differentiation by negatively regulating thrombopoietin-mediated signaling pathway. Participates in the endomitotic cell cycle of megakaryocyte, a form of mitosis in which both karyokinesis and cytokinesis are interrupted. Plays a role in integrin signaling by negatively regulating alpha-IIb/beta3 activation in thrombin-stimulated megakaryocytes preventing platelet aggregation. Up-regulates PTK2/FAK1 activity, and is also needed for the recruitment of PTK2/FAK1 to focal adhesions; it thus appears to play an important role in focal adhesion formation. Positively regulates cell migration on fibronectin in a CDC42-dependent manner, the effect being negatively regulated by PAK1. Functions as a negative regulator of stress activated MAP kinase (MAPK) signaling pathways. Down-regulates inositol 1,4,5-trisphosphate receptor-dependent calcium signaling. Involved in sphingosine kinase SPHK1 translocation to the plasma membrane in a N-myristoylation-dependent manner preventing TNF-alpha-induced apoptosis. Regulates serine/threonine-protein kinase PLK3 activity for proper completion of cell division progression. Plays a role in microtubule (MT) dynamics during neuronal development; disrupts the MT depolymerization activity of STMN2 attenuating NGF-induced neurite outgrowth and the MT reorganization at the edge of lamellipodia. Promotes cardiomyocyte hypertrophy via activation of the calcineurin/NFAT signaling pathway. Stimulates calcineurin PPP3R1 activity by mediating its anchoring to the sarcolemma. In ischemia-induced (pathological or adaptive) angiogenesis, stimulates endothelial cell proliferation, migration and microvessel formation by activating the PAK1 and ERK1/ERK2 signaling pathway. Also promotes cancer cell survival and proliferation. May regulate cell cycle and differentiation of spermatogenic germ cells, and/or differentiation of supporting Sertoli cells. Forms a complex with TMC6/EVER1 and TMC8/EVER2 in lymphocytes and keratynocytes where CIB1 stabilizes TMC6 and TMC8 levels and reciprocally. This chain is Calcium and integrin-binding protein 1 (CIB1), found in Bos taurus (Bovine).